We begin with the raw amino-acid sequence, 323 residues long: tRNA dimethylallyltransferase (323 aa).

12 to 19 (GPTAAGKT) lines the ATP pocket. 14–19 (TAAGKT) lines the substrate pocket. 2 interaction with substrate tRNA regions span residues 37–40 (DSAL) and 161–165 (QRLIR).

It belongs to the IPP transferase family. Monomer. It depends on Mg(2+) as a cofactor.

It carries out the reaction adenosine(37) in tRNA + dimethylallyl diphosphate = N(6)-dimethylallyladenosine(37) in tRNA + diphosphate. Functionally, catalyzes the transfer of a dimethylallyl group onto the adenine at position 37 in tRNAs that read codons beginning with uridine, leading to the formation of N6-(dimethylallyl)adenosine (i(6)A). The sequence is that of tRNA dimethylallyltransferase from Pseudomonas putida (strain W619).